The chain runs to 65 residues: Large ribosomal subunit protein bL35 (65 aa).

This sequence belongs to the bacterial ribosomal protein bL35 family.

The sequence is that of Large ribosomal subunit protein bL35 from Thiobacillus denitrificans (strain ATCC 25259 / T1).